Reading from the N-terminus, the 407-residue chain is Serine/threonine transporter SstT (407 aa).

9 helical membrane-spanning segments follow: residues 12 to 32 (GNLIVQICIGIVLGILIGISS), 42 to 62 (LGILFTSALKAIAPMLVFILI), 81 to 101 (IIILYIVGTFLASACAVLANF), 141 to 161 (ALSSGNYLGILTWAIAGGIAL), 179 to 199 (VLKIVKFIVKLAPFGIFGLVA), 218 to 238 (ILLVATMLFVTFVINALIVFF), 245 to 267 (FPLIFICLRHSAFFAFFTRSSAA), 288 to 308 (ISIPLGATINMAGAAVTIAIL), and 330 to 350 (IIATFAACGASGVAGGSLLLI).

This sequence belongs to the dicarboxylate/amino acid:cation symporter (DAACS) (TC 2.A.23) family.

The protein localises to the cell inner membrane. The enzyme catalyses L-serine(in) + Na(+)(in) = L-serine(out) + Na(+)(out). The catalysed reaction is L-threonine(in) + Na(+)(in) = L-threonine(out) + Na(+)(out). In terms of biological role, involved in the import of serine and threonine into the cell, with the concomitant import of sodium (symport system). The chain is Serine/threonine transporter SstT from Campylobacter jejuni subsp. jejuni serotype O:23/36 (strain 81-176).